The chain runs to 260 residues: 3-deoxy-manno-octulosonate cytidylyltransferase (260 aa).

It belongs to the KdsB family.

The protein localises to the cytoplasm. The enzyme catalyses 3-deoxy-alpha-D-manno-oct-2-ulosonate + CTP = CMP-3-deoxy-beta-D-manno-octulosonate + diphosphate. It participates in nucleotide-sugar biosynthesis; CMP-3-deoxy-D-manno-octulosonate biosynthesis; CMP-3-deoxy-D-manno-octulosonate from 3-deoxy-D-manno-octulosonate and CTP: step 1/1. The protein operates within bacterial outer membrane biogenesis; lipopolysaccharide biosynthesis. Its function is as follows. Activates KDO (a required 8-carbon sugar) for incorporation into bacterial lipopolysaccharide in Gram-negative bacteria. This is 3-deoxy-manno-octulosonate cytidylyltransferase from Polaromonas naphthalenivorans (strain CJ2).